The following is a 361-amino-acid chain: Chorismate synthase (361 aa).

R48 is an NADP(+) binding site. Residues 125–127 (RSS), 238–239 (NA), G278, 293–297 (KPTSS), and R319 contribute to the FMN site.

It belongs to the chorismate synthase family. As to quaternary structure, homotetramer. FMNH2 is required as a cofactor.

It catalyses the reaction 5-O-(1-carboxyvinyl)-3-phosphoshikimate = chorismate + phosphate. It functions in the pathway metabolic intermediate biosynthesis; chorismate biosynthesis; chorismate from D-erythrose 4-phosphate and phosphoenolpyruvate: step 7/7. Its function is as follows. Catalyzes the anti-1,4-elimination of the C-3 phosphate and the C-6 proR hydrogen from 5-enolpyruvylshikimate-3-phosphate (EPSP) to yield chorismate, which is the branch point compound that serves as the starting substrate for the three terminal pathways of aromatic amino acid biosynthesis. This reaction introduces a second double bond into the aromatic ring system. The chain is Chorismate synthase from Aliivibrio fischeri (strain ATCC 700601 / ES114) (Vibrio fischeri).